The sequence spans 247 residues: Bidirectional sugar transporter SWEET1 (247 aa).

The Extracellular segment spans residues 1 to 6 (MNIAHT). The helical transmembrane segment at 7 to 27 (IFGVFGNATALFLFLAPSITF) threads the bilayer. The region spanning 7-94 (IFGVFGNATA…LIFLFYAPKK (88 aa)) is the MtN3/slv 1 domain. At 28 to 41 (KRIIKNKSTEQFSG) the chain is on the cytoplasmic side. Residues 42-62 (IPYPMTLLNCLLSAWYGLPFV) traverse the membrane as a helical segment. Over 63–71 (SKDNTLVST) the chain is Extracellular. Residues 72 to 92 (INGTGAVIETVYVLIFLFYAP) traverse the membrane as a helical segment. Residues 93–98 (KKEKIK) lie on the Cytoplasmic side of the membrane. A helical transmembrane segment spans residues 99 to 119 (IFGIFSCVLAVFATVALVSLF). Residues 120–127 (ALQGNGRK) are Extracellular-facing. The chain crosses the membrane as a helical span at residues 128 to 148 (LFCGLAATVFSIIMYASPLSI). Positions 130-213 (CGLAATVFSI…ILYFIYCGNK (84 aa)) constitute a MtN3/slv 2 domain. Topologically, residues 149 to 162 (MRLVVKTKSVEFMP) are cytoplasmic. Residues 163–183 (FFLSLFVFLCGTSWFVYGLIG) traverse the membrane as a helical segment. Over 184-187 (RDPF) the chain is Extracellular. The helical transmembrane segment at 188-208 (VAIPNGFGCALGTLQLILYFI) threads the bilayer. Residues 209–247 (YCGNKGEKSADAQKDEKSVEMKDDEKKQNVVNGKQDLQV) are Cytoplasmic-facing. A compositionally biased stretch (basic and acidic residues) spans 221–236 (QKDEKSVEMKDDEKKQ). The tract at residues 221-247 (QKDEKSVEMKDDEKKQNVVNGKQDLQV) is disordered. Residues 237 to 247 (NVVNGKQDLQV) are compositionally biased toward polar residues.

The protein belongs to the SWEET sugar transporter family. Forms homooligomers and heterooligomers with SWEET9, SWEET11, SWEET13, SWEET15, SWEET16 and SWEET17. In terms of tissue distribution, mainly expressed in flowers.

The protein localises to the cell membrane. It is found in the endoplasmic reticulum membrane. Its function is as follows. Mediates both low-affinity uptake and efflux of sugar across the plasma membrane. Can transport glucose, and, to a lower extent, mannose, fructose and galactose. The chain is Bidirectional sugar transporter SWEET1 from Arabidopsis thaliana (Mouse-ear cress).